A 348-amino-acid chain; its full sequence is Killer cell immunoglobulin-like receptor 2DL2 (348 aa).

Positions 1 to 21 (MSLMVVSMACVGFFLLQGAWP) are cleaved as a signal peptide. The Extracellular segment spans residues 22–245 (HEGVHRKPSL…SKTGNPRHLH (224 aa)). 2 Ig-like C2-type domains span residues 42-107 (EETV…VTHS) and 142-205 (GESV…FRDS). Intrachain disulfides connect Cys49–Cys100 and Cys149–Cys198. Asn84, Asn178, and Asn211 each carry an N-linked (GlcNAc...) asparagine glycan. The helical transmembrane segment at 246-264 (ILIGTSVVIILFILLFFLL) threads the bilayer. Over 265-348 (HRWCSNKKNA…ESRSKVVSCP (84 aa)) the chain is Cytoplasmic.

The protein belongs to the immunoglobulin superfamily.

It is found in the cell membrane. Receptor on natural killer (NK) cells for HLA-Cw1, 3, 7, and 8 allotypes. Inhibits the activity of NK cells thus preventing cell lysis. This Homo sapiens (Human) protein is Killer cell immunoglobulin-like receptor 2DL2.